A 346-amino-acid polypeptide reads, in one-letter code: NADH-ubiquinone oxidoreductase chain 2 (346 aa).

The next 9 helical transmembrane spans lie at 7 to 27, 59 to 79, 93 to 115, 151 to 171, 178 to 198, 200 to 220, 242 to 262, 275 to 294, and 325 to 345; these read AIITSGLILGPIITMSSNHWI, YFLTQAMASYLMLSAALMNMW, ISCTTMTVAMSIKLAAAPFHFWF, TTLLIALGMTSILIGGWGGLN, IMAFSSIAHLGWMYAILTLSP, ILLLTFYLYVAMTATTFLMIN, TMMLLNLMSLAGLPPLTGFAP, LSMFASMMITSSLLSLYFYL, and LATITPLATALMPLLPTLKAI.

It belongs to the complex I subunit 2 family.

It is found in the mitochondrion inner membrane. It carries out the reaction a ubiquinone + NADH + 5 H(+)(in) = a ubiquinol + NAD(+) + 4 H(+)(out). Core subunit of the mitochondrial membrane respiratory chain NADH dehydrogenase (Complex I) that is believed to belong to the minimal assembly required for catalysis. Complex I functions in the transfer of electrons from NADH to the respiratory chain. The immediate electron acceptor for the enzyme is believed to be ubiquinone. The sequence is that of NADH-ubiquinone oxidoreductase chain 2 (MT-ND2) from Pelomedusa subrufa (African side-necked turtle).